The primary structure comprises 95 residues: Small ribosomal subunit protein uS19 (95 aa).

Belongs to the universal ribosomal protein uS19 family.

Protein S19 forms a complex with S13 that binds strongly to the 16S ribosomal RNA. The polypeptide is Small ribosomal subunit protein uS19 (Clostridium kluyveri (strain NBRC 12016)).